A 164-amino-acid polypeptide reads, in one-letter code: GTP-dependent dephospho-CoA kinase (164 aa).

Asp40, Val41, Val42, Asp59, Lys61, and Glu113 together coordinate GTP.

The protein belongs to the GTP-dependent DPCK family.

The enzyme catalyses 3'-dephospho-CoA + GTP = GDP + CoA + H(+). It functions in the pathway cofactor biosynthesis; coenzyme A biosynthesis. In terms of biological role, catalyzes the GTP-dependent phosphorylation of the 3'-hydroxyl group of dephosphocoenzyme A to form coenzyme A (CoA). This is GTP-dependent dephospho-CoA kinase from Sulfolobus acidocaldarius (strain ATCC 33909 / DSM 639 / JCM 8929 / NBRC 15157 / NCIMB 11770).